Consider the following 438-residue polypeptide: Aspartate--tRNA(Asp/Asn) ligase (438 aa).

Residue glutamate 176 coordinates L-aspartate. An aspartate region spans residues 198–201; the sequence is QLYK. Arginine 220 contacts L-aspartate. Residues 220 to 222, 228 to 230, and glutamate 361 each bind ATP; these read RAE and RHL. The Mg(2+) site is built by glutamate 361 and serine 364. Serine 364 and arginine 368 together coordinate L-aspartate. 409-412 provides a ligand contact to ATP; that stretch reads GIER.

It belongs to the class-II aminoacyl-tRNA synthetase family. Type 2 subfamily. As to quaternary structure, homodimer. The cofactor is Mg(2+).

The protein resides in the cytoplasm. The catalysed reaction is tRNA(Asx) + L-aspartate + ATP = L-aspartyl-tRNA(Asx) + AMP + diphosphate. In terms of biological role, aspartyl-tRNA synthetase with relaxed tRNA specificity since it is able to aspartylate not only its cognate tRNA(Asp) but also tRNA(Asn). Reaction proceeds in two steps: L-aspartate is first activated by ATP to form Asp-AMP and then transferred to the acceptor end of tRNA(Asp/Asn). This chain is Aspartate--tRNA(Asp/Asn) ligase, found in Methanococcus aeolicus (strain ATCC BAA-1280 / DSM 17508 / OCM 812 / Nankai-3).